Here is a 343-residue protein sequence, read N- to C-terminus: MDSEEIPTFSSPKEETAYWKELSLKYKQSFQEAREELAEFQEGSRELEAELEAQLVQAEQRNRDLQADNQRLKYEVETLKEKLEHQYAQSYKQVSLLEDDLSQTRAIKDQLHKYVRELEQANDDLERAKRATIVSLEDFEQRLNQAIERNAFLESELDDKESLLVSVQRLKDEARDLRQELAVRERQQEVTRKSAPSSPTLDCEKMDSAVQASLSLPATPVGKGSENSFPSPKAIPNGFGTSPLTPSARISALNIVGDLLRKVGALESKLAACRNFAKDQASRKSYISGNANSSMMSSNGTKYPHPGHTSFFDKGAVNGFDQGTPGLGASRPSSAPGMLPLSV.

Residues 25-190 (KYKQSFQEAR…LAVRERQQEV (166 aa)) adopt a coiled-coil conformation. Disordered regions lie at residues 184–204 (RERQ…LDCE) and 322–343 (QGTP…PLSV).

It belongs to the nudE family. Post-translationally, phosphorylated in mitosis.

It localises to the cytoplasm. It is found in the cytoskeleton. Its subcellular location is the microtubule organizing center. The protein localises to the centrosome. The protein resides in the spindle. Required for organization of the cellular microtubule array and microtubule anchoring at the centrosome. Positively regulates the activity of the minus-end directed microtubule motor protein dynein. May enhance dynein-mediated microtubule sliding by targeting dynein to the microtubule plus end. Positively regulates lysosome peripheral distribution and ruffled border formation in osteoclasts. The protein is Nuclear distribution protein nudE-like 1 (NDEL1) of Gallus gallus (Chicken).